We begin with the raw amino-acid sequence, 275 residues long: tRNA (guanine-N(1)-)-methyltransferase (275 aa).

Residues glycine 124 and 149-154 (IGDYVL) contribute to the S-adenosyl-L-methionine site.

This sequence belongs to the RNA methyltransferase TrmD family. Homodimer.

It localises to the cytoplasm. The catalysed reaction is guanosine(37) in tRNA + S-adenosyl-L-methionine = N(1)-methylguanosine(37) in tRNA + S-adenosyl-L-homocysteine + H(+). Functionally, specifically methylates guanosine-37 in various tRNAs. This chain is tRNA (guanine-N(1)-)-methyltransferase, found in Bifidobacterium animalis subsp. lactis (strain AD011).